The sequence spans 517 residues: Crotonobetaine/carnitine--CoA ligase (517 aa).

The protein belongs to the ATP-dependent AMP-binding enzyme family.

It carries out the reaction 4-(trimethylamino)butanoate + ATP + CoA = 4-(trimethylamino)butanoyl-CoA + AMP + diphosphate. The enzyme catalyses crotonobetaine + ATP + CoA = crotonobetainyl-CoA + AMP + diphosphate. It catalyses the reaction (R)-carnitine + ATP + CoA = (R)-carnitinyl-CoA + AMP + diphosphate. It participates in amine and polyamine metabolism; carnitine metabolism. Its function is as follows. Catalyzes the transfer of CoA to carnitine, generating the initial carnitinyl-CoA needed for the CaiB reaction cycle. Also has activity toward crotonobetaine and gamma-butyrobetaine. In Escherichia coli O7:K1 (strain IAI39 / ExPEC), this protein is Crotonobetaine/carnitine--CoA ligase.